The sequence spans 549 residues: Dihydroxy-acid dehydratase (549 aa).

Aspartate 78 is a Mg(2+) binding site. A [2Fe-2S] cluster-binding site is contributed by cysteine 119. 2 residues coordinate Mg(2+): aspartate 120 and lysine 121. An N6-carboxylysine modification is found at lysine 121. [2Fe-2S] cluster is bound at residue cysteine 191. Glutamate 441 is a binding site for Mg(2+). Serine 466 (proton acceptor) is an active-site residue.

The protein belongs to the IlvD/Edd family. As to quaternary structure, homodimer. It depends on [2Fe-2S] cluster as a cofactor. Mg(2+) serves as cofactor.

It catalyses the reaction (2R)-2,3-dihydroxy-3-methylbutanoate = 3-methyl-2-oxobutanoate + H2O. The catalysed reaction is (2R,3R)-2,3-dihydroxy-3-methylpentanoate = (S)-3-methyl-2-oxopentanoate + H2O. Its pathway is amino-acid biosynthesis; L-isoleucine biosynthesis; L-isoleucine from 2-oxobutanoate: step 3/4. It participates in amino-acid biosynthesis; L-valine biosynthesis; L-valine from pyruvate: step 3/4. Functionally, functions in the biosynthesis of branched-chain amino acids. Catalyzes the dehydration of (2R,3R)-2,3-dihydroxy-3-methylpentanoate (2,3-dihydroxy-3-methylvalerate) into 2-oxo-3-methylpentanoate (2-oxo-3-methylvalerate) and of (2R)-2,3-dihydroxy-3-methylbutanoate (2,3-dihydroxyisovalerate) into 2-oxo-3-methylbutanoate (2-oxoisovalerate), the penultimate precursor to L-isoleucine and L-valine, respectively. This Methanosphaera stadtmanae (strain ATCC 43021 / DSM 3091 / JCM 11832 / MCB-3) protein is Dihydroxy-acid dehydratase.